Here is a 346-residue protein sequence, read N- to C-terminus: Protein RecA (346 aa).

Position 65–72 (65–72 (GPESSGKT)) interacts with ATP.

This sequence belongs to the RecA family.

It is found in the cytoplasm. Can catalyze the hydrolysis of ATP in the presence of single-stranded DNA, the ATP-dependent uptake of single-stranded DNA by duplex DNA, and the ATP-dependent hybridization of homologous single-stranded DNAs. It interacts with LexA causing its activation and leading to its autocatalytic cleavage. This is Protein RecA from Pseudomonas aeruginosa (strain UCBPP-PA14).